Reading from the N-terminus, the 124-residue chain is MHKLLKLLSITLIGLSVATGVQANVRAEMNQMKTVAATLTNAKDVAEFQESAKILREIAQQSSEKRPSSITNDADFKGYQEGMKEFITALDEADKLAQEGNLDAAKTAAKKLFDIRNVYHKKYK.

An N-terminal signal peptide occupies residues 1 to 23 (MHKLLKLLSITLIGLSVATGVQA).

The protein belongs to the cytochrome b562 family.

This is an uncharacterized protein from Pasteurella multocida (strain Pm70).